We begin with the raw amino-acid sequence, 142 residues long: Large ribosomal subunit protein uL13 (142 aa).

The protein belongs to the universal ribosomal protein uL13 family. Part of the 50S ribosomal subunit.

Its function is as follows. This protein is one of the early assembly proteins of the 50S ribosomal subunit, although it is not seen to bind rRNA by itself. It is important during the early stages of 50S assembly. The sequence is that of Large ribosomal subunit protein uL13 from Pyrococcus horikoshii (strain ATCC 700860 / DSM 12428 / JCM 9974 / NBRC 100139 / OT-3).